Reading from the N-terminus, the 259-residue chain is UPF0246 protein NGO_0461 (259 aa).

It belongs to the UPF0246 family.

This is UPF0246 protein NGO_0461 from Neisseria gonorrhoeae (strain ATCC 700825 / FA 1090).